Here is a 237-residue protein sequence, read N- to C-terminus: Octopine transport system permease protein OccQ (237 aa).

Residues 22-222 (TGMTVAVASS…LITFISGQAF (201 aa)) form the ABC transmembrane type-1 domain. The next 4 membrane-spanning stretches (helical) occupy residues 24-44 (MTVA…CLGA), 72-92 (LVIY…GSLF), 96-116 (GFVS…VSAA), and 201-221 (FSFY…SGQA).

It belongs to the binding-protein-dependent transport system permease family. HisMQ subfamily.

Its subcellular location is the cell inner membrane. Component of the octopine active transport system probably consisting of four subunits: Q, M, P and T. The protein is Octopine transport system permease protein OccQ (occQ) of Rhizobium meliloti (Ensifer meliloti).